The following is a 310-amino-acid chain: Putative carboxypeptidase SCO6489 (310 aa).

Ser-116 acts as the Nucleophile in catalysis. Catalysis depends on charge relay system residues Glu-212 and His-277.

Belongs to the peptidase S66 family.

This Streptomyces coelicolor (strain ATCC BAA-471 / A3(2) / M145) protein is Putative carboxypeptidase SCO6489.